A 248-amino-acid polypeptide reads, in one-letter code: Proteasome subunit alpha (248 aa).

This sequence belongs to the peptidase T1A family. In terms of assembly, the 20S proteasome core is composed of 14 alpha and 14 beta subunits that assemble into four stacked heptameric rings, resulting in a barrel-shaped structure. The two inner rings, each composed of seven catalytic beta subunits, are sandwiched by two outer rings, each composed of seven alpha subunits. The catalytic chamber with the active sites is on the inside of the barrel. Has a gated structure, the ends of the cylinder being occluded by the N-termini of the alpha-subunits. Is capped by the proteasome-associated ATPase, ARC.

The protein localises to the cytoplasm. It functions in the pathway protein degradation; proteasomal Pup-dependent pathway. The formation of the proteasomal ATPase ARC-20S proteasome complex, likely via the docking of the C-termini of ARC into the intersubunit pockets in the alpha-rings, may trigger opening of the gate for substrate entry. Interconversion between the open-gate and close-gate conformations leads to a dynamic regulation of the 20S proteasome proteolysis activity. Its function is as follows. Component of the proteasome core, a large protease complex with broad specificity involved in protein degradation. This Mycobacterium tuberculosis (strain ATCC 25177 / H37Ra) protein is Proteasome subunit alpha.